The primary structure comprises 422 residues: Replication factor C large subunit (422 aa).

63–70 (GPPGVGKT) lines the ATP pocket.

The protein belongs to the activator 1 small subunits family. RfcL subfamily. In terms of assembly, heteromultimer composed of small subunits (RfcS) and large subunits (RfcL).

Its function is as follows. Part of the RFC clamp loader complex which loads the PCNA sliding clamp onto DNA. The sequence is that of Replication factor C large subunit from Pyrobaculum arsenaticum (strain DSM 13514 / JCM 11321 / PZ6).